The chain runs to 833 residues: Leucine--tRNA ligase (833 aa).

The short motif at 41-52 (PYPSGAGLHVGH) is the 'HIGH' region element. The 'KMSKS' region signature appears at 610–614 (KMSKS). Lys-613 is a binding site for ATP.

The protein belongs to the class-I aminoacyl-tRNA synthetase family.

The protein resides in the cytoplasm. The catalysed reaction is tRNA(Leu) + L-leucine + ATP = L-leucyl-tRNA(Leu) + AMP + diphosphate. This chain is Leucine--tRNA ligase, found in Streptococcus equi subsp. zooepidemicus (strain MGCS10565).